Here is a 196-residue protein sequence, read N- to C-terminus: HTH-type transcriptional regulator UidR (196 aa).

The 61-residue stretch at Q10–A70 folds into the HTH tetR-type domain. The H-T-H motif DNA-binding region spans S33–F52.

In terms of biological role, repressor for the uidRABC (gusRABC) operon. The sequence is that of HTH-type transcriptional regulator UidR (uidR) from Escherichia coli O157:H7.